The sequence spans 173 residues: Large ribosomal subunit protein uL16 (173 aa).

The protein belongs to the universal ribosomal protein uL16 family.

The protein is Large ribosomal subunit protein uL16 of Methanococcus maripaludis (strain C5 / ATCC BAA-1333).